A 471-amino-acid polypeptide reads, in one-letter code: MSSSSSTSPRFGSMISAKLASPPPSLLLPPSPRLQGRRLTPPSCTPGTPAALPSPGPDKEPEREAAGSGSGSATTPRSPAQLGSSQLHRWSRARAHRSGRRLEWPTIRDRGSGGASSPPTPTRPHPSSDEAASAAAKVAVEEEDGYGVVGRDEAAKSIYMVSDGTGWTAEHSVNAALGQFEHCLVDRGCAVNTHLFNGIDDMDRLIEIVKQAAKEGALVLYTLADPSMAEATKKACELWGVPSNDILRPTIEAIASHIGVAPSGIPRSSPSRKGQLTEDYFRRIEAIDFTIKQDDGAQPQNLNRAHIVLVGVSRTGKTPLSIYLAQKGYKVANVPIVMGVNLPKSLFEIDQDKIFGLTINPVVLQAIRKARAKTLGFHGQKSNYAEMEHVRGELDHANQIFAQHPIWPVIEVTGKAIEETAAVVVRIFHDRKQKCAMPRISKRVAPIRIYDYLSEMVNTHVEYQKIFARDF.

Residues 1–49 (MSSSSSTSPRFGSMISAKLASPPPSLLLPPSPRLQGRRLTPPSCTPGTP) constitute a chloroplast transit peptide. The segment at 1-133 (MSSSSSTSPR…PHPSSDEAAS (133 aa)) is disordered. The span at 21 to 32 (SPPPSLLLPPSP) shows a compositional bias: pro residues. The span at 71 to 88 (GSATTPRSPAQLGSSQLH) shows a compositional bias: polar residues. Positions 89 to 99 (RWSRARAHRSG) are enriched in basic residues. Residues 100-111 (RRLEWPTIRDRG) are compositionally biased toward basic and acidic residues. Residue 171-178 (HSVNAALG) participates in ADP binding.

Belongs to the pyruvate, phosphate/water dikinase regulatory protein family. PDRP subfamily.

The protein resides in the plastid. Its subcellular location is the chloroplast. It carries out the reaction N(tele)-phospho-L-histidyl/L-threonyl-[pyruvate, phosphate dikinase] + ADP = N(tele)-phospho-L-histidyl/O-phospho-L-threonyl-[pyruvate, phosphate dikinase] + AMP + H(+). The catalysed reaction is N(tele)-phospho-L-histidyl/O-phospho-L-threonyl-[pyruvate, phosphate dikinase] + phosphate + H(+) = N(tele)-phospho-L-histidyl/L-threonyl-[pyruvate, phosphate dikinase] + diphosphate. Its activity is regulated as follows. Regulated by light/dark exposure. Bifunctional serine/threonine kinase and phosphorylase involved in the dark/light-mediated regulation of PPDK by catalyzing its phosphorylation/dephosphorylation. Dark/light-induced changes in stromal concentrations of the competing ADP and Pi substrates govern the direction of the reaction. In the dark, phosphorylates the catalytic intermediate of PPDK (PPDK-HisP), inactivating it. Light exposure induces the phosphorolysis reaction that reactivates PPDK. In Oryza sativa subsp. indica (Rice), this protein is Probable pyruvate, phosphate dikinase regulatory protein, chloroplastic (PDRP1).